Consider the following 355-residue polypeptide: Protein-tyrosine sulfotransferase 1 (355 aa).

Residues 1–8 (MIGKLKQN) lie on the Cytoplasmic side of the membrane. Residues 9 to 25 (LLVACLVISSVTVFYLC) form a helical; Signal-anchor for type II membrane protein membrane-spanning segment. Topologically, residues 26 to 355 (RHAMDCHHRI…QKSPEKPNPS (330 aa)) are lumenal. Residue N55 is glycosylated (N-linked (GlcNAc...) asparagine). 76 to 80 (RSGTT) lines the 3'-phosphoadenylyl sulfate pocket. Residues C94 and C154 are joined by a disulfide bond. The active-site Proton donor/acceptor is E97. The interval 99–103 (RVIPR) is interaction with peptide substrate. The 3'-phosphoadenylyl sulfate site is built by R181, S189, and R193. An intrachain disulfide couples C223 to C230. Residues Y235, 282–291 (STDQVIKPVN), and K297 each bind 3'-phosphoadenylyl sulfate. The disordered stretch occupies residues 325–355 (HANPPNYGRPDPLVLDNTRRLQKSPEKPNPS). Positions 341–355 (NTRRLQKSPEKPNPS) are enriched in basic and acidic residues.

This sequence belongs to the protein sulfotransferase family.

The protein resides in the golgi apparatus membrane. It carries out the reaction L-tyrosyl-[protein] + 3'-phosphoadenylyl sulfate = O-sulfo-L-tyrosine-[protein] + adenosine 3',5'-bisphosphate + H(+). Its function is as follows. Catalyzes the O-sulfation of tyrosine residues within acidic motifs of polypeptides, using 3'-phosphoadenylyl sulfate (PAPS) as cosubstrate. The chain is Protein-tyrosine sulfotransferase 1 (tpst1) from Danio rerio (Zebrafish).